Here is a 576-residue protein sequence, read N- to C-terminus: Cilia- and flagella-associated protein 100 (576 aa).

Residues 1-29 are disordered; the sequence is MPIYDEASVPGTAAGRSTTDVGATAGANP. Coiled coils occupy residues 125–226, 254–311, and 342–408; these read IFLL…CRRY, VAEW…IMKE, and YKQL…LKDR. 3 disordered regions span residues 417-439, 495-519, and 538-563; these read TLSMGSSNAPTSSVTGSSGPGGP, AEKAREKDRRKVARDEKLSTQHREH, and TGKPLMFRSAPPQRKKVVQADDRNDE.

Belongs to the CFAP100 family. Interacts with FAP73; form the modifier of inner arm (MIA) complex.

Its subcellular location is the cytoplasm. The protein resides in the cytoskeleton. The protein localises to the flagellum axoneme. As part of MIA, a complex associated with the outer doublet microtubules of the axoneme, may play a role in ciliary/flagellar motility by regulating the assembly and the activity of axonemal inner dynein arm. The protein is Cilia- and flagella-associated protein 100 of Chlamydomonas reinhardtii (Chlamydomonas smithii).